The primary structure comprises 601 residues: Glutathione-regulated potassium-efflux system protein KefB (601 aa).

13 helical membrane passes run 4–24, 29–49, 55–75, 87–107, 111–131, 152–172, 177–197, 207–227, 230–250, 262–282, 284–304, 324–344, and 356–376; these read ADLL…VPLA, IGAV…GLGF, EILH…GLEL, IFGV…GLLM, FLWQ…TAMA, VLLF…LLAG, HFDW…LIGG, FIAA…LVLS, LFMD…GVLL, AIDP…GMSL, LGVL…LVVI, MQFA…FSTA, and ALLL…MKGI. Residues 400–519 enclose the RCK N-terminal domain; the sequence is KPQVVVVGFG…AGVTQFSRET (120 aa).

Belongs to the monovalent cation:proton antiporter 2 (CPA2) transporter (TC 2.A.37) family. KefB subfamily. Interacts with the regulatory subunit KefG.

The protein resides in the cell inner membrane. Pore-forming subunit of a potassium efflux system that confers protection against electrophiles. Catalyzes K(+)/H(+) antiport. In Salmonella typhi, this protein is Glutathione-regulated potassium-efflux system protein KefB.